Here is a 106-residue protein sequence, read N- to C-terminus: Biogenesis of lysosome-related organelles complex 1 subunit 6 (106 aa).

Residues 78 to 106 (KKTSQLELSDTNIEDGSTTSTPTTTNKSQ) are disordered. Residues 82-93 (QLELSDTNIEDG) show a composition bias toward polar residues. Residues 94-106 (STTSTPTTTNKSQ) show a composition bias toward low complexity.

This sequence belongs to the BLOC1S6 family. As to quaternary structure, homodimer (isoform 1). Component of the biogenesis of lysosome-related organelles complex-1 (BLOC-1) composed at least of blos-1, blos-2, blos-4, dsbn-1, glo-2, mutd-1 and snpn-1. Isoform 1 interacts with blos-1 and blos-4.

It localises to the cytoplasm. Its subcellular location is the endosome. Its function is as follows. Component of the biogenesis of lysosome-related organelles complex-1 (BLOC-1) involved in gut granule biogenesis. The chain is Biogenesis of lysosome-related organelles complex 1 subunit 6 (glo-2) from Caenorhabditis elegans.